The primary structure comprises 31 residues: Photosystem II reaction center protein M (31 aa).

A helical transmembrane segment spans residues 5–25 (ILALMATALFIIIPTAFLIIL).

This sequence belongs to the PsbM family. In terms of assembly, PSII is composed of 1 copy each of membrane proteins PsbA, PsbB, PsbC, PsbD, PsbE, PsbF, PsbH, PsbI, PsbJ, PsbK, PsbL, PsbM, PsbT, PsbX, PsbY, PsbZ, Psb30/Ycf12, at least 3 peripheral proteins of the oxygen-evolving complex and a large number of cofactors. It forms dimeric complexes.

It is found in the plastid. It localises to the chloroplast thylakoid membrane. Functionally, one of the components of the core complex of photosystem II (PSII). PSII is a light-driven water:plastoquinone oxidoreductase that uses light energy to abstract electrons from H(2)O, generating O(2) and a proton gradient subsequently used for ATP formation. It consists of a core antenna complex that captures photons, and an electron transfer chain that converts photonic excitation into a charge separation. This subunit is found at the monomer-monomer interface. The polypeptide is Photosystem II reaction center protein M (Mesostigma viride (Green alga)).